We begin with the raw amino-acid sequence, 629 residues long: tRNA uridine 5-carboxymethylaminomethyl modification enzyme MnmG (629 aa).

Residue 13–18 (GGGHAG) participates in FAD binding. Residue 273–287 (GPRYCPSIEDKIHRF) coordinates NAD(+).

The protein belongs to the MnmG family. As to quaternary structure, homodimer. Heterotetramer of two MnmE and two MnmG subunits. FAD serves as cofactor.

It is found in the cytoplasm. Its function is as follows. NAD-binding protein involved in the addition of a carboxymethylaminomethyl (cmnm) group at the wobble position (U34) of certain tRNAs, forming tRNA-cmnm(5)s(2)U34. The chain is tRNA uridine 5-carboxymethylaminomethyl modification enzyme MnmG from Shewanella denitrificans (strain OS217 / ATCC BAA-1090 / DSM 15013).